The sequence spans 145 residues: Protein FimA (145 aa).

This sequence belongs to the fimbrial protein family.

Its subcellular location is the fimbrium. The chain is Protein FimA (fimA) from Bordetella pertussis.